Here is a 624-residue protein sequence, read N- to C-terminus: Adhesion and hyphal regulator 1 (624 aa).

Positions 19-46 form a DNA-binding region, zn(2)-C6 fungal-type; sequence CVTCRDRHIKCDEQQPVCKNCQKSNRKC. Disordered stretches follow at residues 63-84 and 230-250; these read DDNK…YAFP and PQHH…TDPN. Polar residues predominate over residues 237 to 250; it reads DTSQHQETTSTDPN.

In terms of assembly, interacts with MCM1.

The protein localises to the nucleus. Transcription factor that binds the promoters of genes involved in biofilm formation, which include several key adhesion genes, and recruits MCM1 to these sites. Plays an important role in hyphal growth and virulence. Promotes conversion of opaque cells to white phase, but needs existence of EFG1, a key regulator required for maintenance of the white state. The chain is Adhesion and hyphal regulator 1 (AHR1) from Candida albicans (strain SC5314 / ATCC MYA-2876) (Yeast).